A 183-amino-acid chain; its full sequence is Peptidyl-tRNA hydrolase (183 aa).

Residue Tyr14 coordinates tRNA. His19 serves as the catalytic Proton acceptor. Residues Tyr64, Asn66, and Asn112 each coordinate tRNA.

This sequence belongs to the PTH family. As to quaternary structure, monomer.

The protein resides in the cytoplasm. The enzyme catalyses an N-acyl-L-alpha-aminoacyl-tRNA + H2O = an N-acyl-L-amino acid + a tRNA + H(+). Hydrolyzes ribosome-free peptidyl-tRNAs (with 1 or more amino acids incorporated), which drop off the ribosome during protein synthesis, or as a result of ribosome stalling. Functionally, catalyzes the release of premature peptidyl moieties from peptidyl-tRNA molecules trapped in stalled 50S ribosomal subunits, and thus maintains levels of free tRNAs and 50S ribosomes. In Anaplasma phagocytophilum (strain HZ), this protein is Peptidyl-tRNA hydrolase.